A 261-amino-acid chain; its full sequence is Chanoclavine-I dehydrogenase easD (261 aa).

Residues Ile18, Lys48, Asp66, Arg132, Tyr166, Lys170, and Thr201 each contribute to the NADP(+) site. Tyr166 serves as the catalytic Proton donor. The active-site Lowers pKa of active site Tyr is Lys170.

This sequence belongs to the short-chain dehydrogenases/reductases (SDR) family.

The catalysed reaction is chanoclavine-I + NAD(+) = chanoclavine-I aldehyde + NADH + H(+). It functions in the pathway alkaloid biosynthesis; ergot alkaloid biosynthesis. Chanoclavine-I dehydrogenase; part of the gene cluster that mediates the biosynthesis of fumiclavanine C, a fungal ergot alkaloid. DmaW catalyzes the first step of ergot alkaloid biosynthesis by condensing dimethylallyl diphosphate (DMAP) and tryptophan to form 4-dimethylallyl-L-tryptophan. The second step is catalyzed by the methyltransferase easF that methylates 4-dimethylallyl-L-tryptophan in the presence of S-adenosyl-L-methionine, resulting in the formation of 4-dimethylallyl-L-abrine. The catalase easC and the FAD-dependent oxidoreductase easE then transform 4-dimethylallyl-L-abrine to chanoclavine-I which is further oxidized by EasD in the presence of NAD(+), resulting in the formation of chanoclavine-I aldehyde. EasA reduces chanoclavine-I aldehyde to dihydrochanoclavine-I aldehyde that spontaneously dehydrates to form 6,8-dimethyl-6,7-didehydroergoline. EasG then catalyzes the reduction of 6,8-dimethyl-6,7-didehydroergoline to form festuclavine. Hydrolysis of festuclavine by easM then leads to the formation of fumigaclavine B which is in turn acetylated by easN to fumigaclavine A. Finally, easL catalyzes the conversion of fumigaclavine A into fumigaclavine C by attaching a dimethylallyl moiety to C-2 of the indole nucleus. The protein is Chanoclavine-I dehydrogenase easD of Aspergillus fumigatus (strain ATCC MYA-4609 / CBS 101355 / FGSC A1100 / Af293) (Neosartorya fumigata).